The sequence spans 334 residues: Holliday junction branch migration complex subunit RuvB (334 aa).

The interval 4 to 186 (ADRLIAPENP…FGITQRLEYY (183 aa)) is large ATPase domain (RuvB-L). ATP is bound by residues Ile-25, Arg-26, Gly-67, Lys-70, Thr-71, Thr-72, 133–135 (EDY), Arg-176, Tyr-186, and Arg-223. Thr-71 serves as a coordination point for Mg(2+). Positions 187 to 257 (KVKDLQDIVQ…TADKALNMLD (71 aa)) are small ATPAse domain (RuvB-S). The segment at 260–334 (AEGFDYMDRK…RAYLHFGIEK (75 aa)) is head domain (RuvB-H). DNA contacts are provided by Arg-315 and Arg-320.

The protein belongs to the RuvB family. In terms of assembly, homohexamer. Forms an RuvA(8)-RuvB(12)-Holliday junction (HJ) complex. HJ DNA is sandwiched between 2 RuvA tetramers; dsDNA enters through RuvA and exits via RuvB. An RuvB hexamer assembles on each DNA strand where it exits the tetramer. Each RuvB hexamer is contacted by two RuvA subunits (via domain III) on 2 adjacent RuvB subunits; this complex drives branch migration. In the full resolvosome a probable DNA-RuvA(4)-RuvB(12)-RuvC(2) complex forms which resolves the HJ.

It localises to the cytoplasm. It carries out the reaction ATP + H2O = ADP + phosphate + H(+). In terms of biological role, the RuvA-RuvB-RuvC complex processes Holliday junction (HJ) DNA during genetic recombination and DNA repair, while the RuvA-RuvB complex plays an important role in the rescue of blocked DNA replication forks via replication fork reversal (RFR). RuvA specifically binds to HJ cruciform DNA, conferring on it an open structure. The RuvB hexamer acts as an ATP-dependent pump, pulling dsDNA into and through the RuvAB complex. RuvB forms 2 homohexamers on either side of HJ DNA bound by 1 or 2 RuvA tetramers; 4 subunits per hexamer contact DNA at a time. Coordinated motions by a converter formed by DNA-disengaged RuvB subunits stimulates ATP hydrolysis and nucleotide exchange. Immobilization of the converter enables RuvB to convert the ATP-contained energy into a lever motion, pulling 2 nucleotides of DNA out of the RuvA tetramer per ATP hydrolyzed, thus driving DNA branch migration. The RuvB motors rotate together with the DNA substrate, which together with the progressing nucleotide cycle form the mechanistic basis for DNA recombination by continuous HJ branch migration. Branch migration allows RuvC to scan DNA until it finds its consensus sequence, where it cleaves and resolves cruciform DNA. The polypeptide is Holliday junction branch migration complex subunit RuvB (Vibrio campbellii (strain ATCC BAA-1116)).